A 498-amino-acid polypeptide reads, in one-letter code: Nucleobase transporter PlAzg2 (498 aa).

13 helical membrane-spanning segments follow: residues 88 to 108 (LLAG…NSSI), 118 to 138 (AGII…GLWG), 142 to 162 (LVIV…VQGM), 169 to 189 (ALAA…TSLV), 203 to 223 (AISV…GGVI), 236 to 256 (FADP…ILYI), 259 to 279 (VPGN…LFKA), 312 to 332 (TLVI…VGLI), 357 to 377 (ILSG…AAGI), 388 to 408 (IATG…TLVP), 412 to 432 (VAPI…HISF), 443 to 463 (FIIA…IGFI), and 478 to 498 (VKPL…LQTM).

This sequence belongs to the nucleobase:cation symporter-2 (NCS2) (TC 2.A.40) family. Azg-like subfamily.

The protein localises to the cell membrane. Its activity is regulated as follows. Inhibited by the proton gradient disruptor carbonyl cyanide m-chlorophenylhydrazone (CCCP), but not by the sodium gradient disruptor ouabain. Functionally, transports adenine, guanine, hypoxanthine, xanthine, cytosine and uracil. Transport is probably proton-dependent. The protein is Nucleobase transporter PlAzg2 of Paenibacillus larvae subsp. larvae (strain NRRL B-3650 / LMG 16245).